Consider the following 89-residue polypeptide: Small ribosomal subunit protein uS15 (89 aa).

It belongs to the universal ribosomal protein uS15 family. Part of the 30S ribosomal subunit. Forms a bridge to the 50S subunit in the 70S ribosome, contacting the 23S rRNA.

Its function is as follows. One of the primary rRNA binding proteins, it binds directly to 16S rRNA where it helps nucleate assembly of the platform of the 30S subunit by binding and bridging several RNA helices of the 16S rRNA. Forms an intersubunit bridge (bridge B4) with the 23S rRNA of the 50S subunit in the ribosome. This chain is Small ribosomal subunit protein uS15, found in Mycobacterium leprae (strain Br4923).